Consider the following 404-residue polypeptide: Endophilin-B2 (404 aa).

N-acetylmethionine is present on M1. The membrane-binding amphipathic helix stretch occupies residues 1–27 (MDFNMKKLASDAGIFFTRAVQFTEEKF). A Phosphoserine modification is found at S10. In terms of domain architecture, BAR spans 24–291 (EEKFGQAEKT…LGSSQGAIFP (268 aa)). A coiled-coil region spans residues 209 to 239 (SASALWNDEVDKAEQELRAAQTEFDRQAEVT). The region spanning 344-404 (SGTRKARVLY…VPVTYLELLS (61 aa)) is the SH3 domain. Residue S404 is modified to Phosphoserine.

It belongs to the endophilin family. Homodimer, and heterodimer with SH3GLB1.

It is found in the cytoplasm. This is Endophilin-B2 from Rattus norvegicus (Rat).